The sequence spans 494 residues: Subtilisin-like serine protease Pen ch 18.0101 (494 aa).

Residues 1 to 16 (MKGFLSLTLLPLLVAA) form the signal peptide. A propeptide spans 17-136 (SPVAVNSIHN…IEKDSEVRTM (120 aa)) (removed in mature form). The 94-residue stretch at 43–136 (SYIVVFKKHV…IEKDSEVRTM (94 aa)) folds into the Inhibitor I9 domain. In terms of domain architecture, Peptidase S8 spans 146–448 (PWGLARISHR…GGSANYTKIL (303 aa)). 2 igE-binding regions span residues 180 to 198 (VIDTGANVKHVDFEGRANW) and 209 to 231 (EDGNGHGTHCSGTIAGKKFGVAK). Catalysis depends on charge relay system residues Asp-182 and His-214. N-linked (GlcNAc...) asparagine glycosylation is found at Asn-244 and Asn-280. The active-site Charge relay system is the Ser-376. Asn-443 carries N-linked (GlcNAc...) asparagine glycosylation. Positions 454–494 (KAHNAETTVEDRIGIIIDSAEKAFHKELGAIYSEIKDAVSV) are cleaved as a propeptide — removed in mature form.

Belongs to the peptidase S8 family.

Its function is as follows. Serine protease. The sequence is that of Subtilisin-like serine protease Pen ch 18.0101 from Penicillium rubens.